Here is a 277-residue protein sequence, read N- to C-terminus: Cis-3,4-dihydrophenanthrene-3,4-diol dehydrogenase (277 aa).

Residues 10-37 (FLTG…TVLD) and aspartate 60 each bind NAD(+). Serine 143 contacts substrate. Catalysis depends on tyrosine 156, which acts as the Proton acceptor. Lysine 160 contacts NAD(+).

It belongs to the short-chain dehydrogenases/reductases (SDR) family. Homotetramer.

It catalyses the reaction (3S,4R)-3,4-dihydrophenanthrene-3,4-diol + NAD(+) = phenanthrene-3,4-diol + NADH + H(+). Its activity is regulated as follows. Inhibited by heavy metal such as Hg(2+) and by p-chloromercuribenzoate. In terms of biological role, involved in the degradation of phenanthrene. Catalyzes the oxidation of cis-phenanthrene dihydrodiol (PDD) to yield phenanthrenediol. It can use either NAD or NADP as electron acceptor, however NAD is preferred to NADP. This is Cis-3,4-dihydrophenanthrene-3,4-diol dehydrogenase (phnB) from Alcaligenes faecalis.